Reading from the N-terminus, the 509-residue chain is MKKQGSPSNPAPVLPALPEPLKDLKIKYTKIFINNEWHDSVSGKKFEVFNPANEEKICEVAEGDKADIDKAVKAARKAFELGSPWRTMDASERGRLLNKLADLVERDRLTLATMEAIDGGKLFSTAYLMDLGACIKTIRYCAGWADKIHGRTVPMDGNFFTFTRHEPVGVCGQIIPWNFPLVMFIWKIAPALCCGNTVVVKPAEQTPLSALYMGSLIKEAGFPPGVVNIVPGFGPTAGAAISHHMDIDKVSFTGSTEVGKLIKEAAGKTNLKRVTLELGGKSPNIIFADADLDEAAEFAHIGLFYHQGQCCIAGSRIFVEEPIYDEFVRRSIERAKKYTLGDPLLPGVQQGPQIDKEQFQKILDLIESGKKEGAKLECGGGPWGNKGYFIQPTVFSNVTDDMRIAKEEIFGPVQQIMKFKTIDEVIKRANNTTYGLAAAVFTKDIDKALTFASALQAGTVWVNCYSAFSAQCPFGGFKMSGNGRELGEYGLQEYTEVKTVTIKIPQKNS.

Residues 175-178 (IPWN), 201-204 (KPAE), 234-235 (GP), 254-255 (GS), and 277-279 (ELG) each bind NAD(+). Glutamate 277 functions as the Proton acceptor in the catalytic mechanism. The Nucleophile role is filled by cysteine 311. NAD(+)-binding positions include 357-361 (EQFQK) and 408-410 (EIF).

The protein belongs to the aldehyde dehydrogenase family. In terms of assembly, homotetramer.

It is found in the cytoplasm. Its subcellular location is the cytosol. The protein localises to the cell projection. It localises to the axon. The enzyme catalyses an aldehyde + NAD(+) + H2O = a carboxylate + NADH + 2 H(+). The catalysed reaction is all-trans-retinal + NAD(+) + H2O = all-trans-retinoate + NADH + 2 H(+). It carries out the reaction 9-cis-retinal + NAD(+) + H2O = 9-cis-retinoate + NADH + 2 H(+). It catalyses the reaction 11-cis-retinal + NAD(+) + H2O = 11-cis-retinoate + NADH + 2 H(+). The enzyme catalyses 13-cis-retinal + NAD(+) + H2O = 13-cis-retinoate + NADH + 2 H(+). The catalysed reaction is 3-deoxyglucosone + NAD(+) + H2O = 2-dehydro-3-deoxy-D-gluconate + NADH + 2 H(+). It carries out the reaction (E)-4-hydroxynon-2-enal + NAD(+) + H2O = (E)-4-hydroxynon-2-enoate + NADH + 2 H(+). It catalyses the reaction malonaldehyde + NAD(+) + H2O = 3-oxopropanoate + NADH + 2 H(+). The enzyme catalyses hexanal + NAD(+) + H2O = hexanoate + NADH + 2 H(+). The catalysed reaction is propanal + NAD(+) + H2O = propanoate + NADH + 2 H(+). It carries out the reaction acetaldehyde + NAD(+) + H2O = acetate + NADH + 2 H(+). It catalyses the reaction benzaldehyde + NAD(+) + H2O = benzoate + NADH + 2 H(+). The enzyme catalyses 4-aminobutanal + NAD(+) + H2O = 4-aminobutanoate + NADH + 2 H(+). Its pathway is cofactor metabolism; retinol metabolism. In terms of biological role, cytosolic dehydrogenase that catalyzes the irreversible oxidation of a wide range of aldehydes to their corresponding carboxylic acid. Functions downstream of retinol dehydrogenases and catalyzes the oxidation of retinaldehyde into retinoic acid, the second step in the oxidation of retinol/vitamin A into retinoic acid. This pathway is crucial to control the levels of retinol and retinoic acid, two important molecules which excess can be teratogenic and cytotoxic. Also oxidizes aldehydes resulting from lipid peroxidation like (E)-4-hydroxynon-2-enal/HNE, malonaldehyde and hexanal that form protein adducts and are highly cytotoxic. By participating for instance to the clearance of (E)-4-hydroxynon-2-enal/HNE in the lens epithelium prevents the formation of HNE-protein adducts and lens opacification. Also functions downstream of fructosamine-3-kinase in the fructosamine degradation pathway by catalyzing the oxidation of 3-deoxyglucosone, the carbohydrate product of fructosamine 3-phosphate decomposition, which is itself a potent glycating agent that may react with lysine and arginine side-chains of proteins. Also has an aminobutyraldehyde dehydrogenase activity and is probably part of an alternative pathway for the biosynthesis of GABA/4-aminobutanoate in midbrain, thereby playing a role in GABAergic synaptic transmission. In Gallus gallus (Chicken), this protein is Aldehyde dehydrogenase 1A1.